The primary structure comprises 364 residues: MYIKSVHLINFRNYDDMYLELSPNTNIFVGNNAQGKTNILESIYYSSIGKSHRTNKDKDLIKWDKNNTYLRTYVSRERLDKTIDINIFKNGKKAITVNKIKIKKISELMGNLNVVMFSPEDLRIIKDSPGNRRKFLDIELCKINNVYYHDLVQYNKILSERNTALKNWNNRINDIIDVYDEQLSKYGAFIIKERNKYLDKLNIIGKNIHKKITNDLEDINFRYLTNIKDFDNAEKELLMLFKKNRKKDLERNSTSIGPHRDDFEVSINNIDTRIFGSQGQQRTAVLTLKFASLEIIKNIIGEYPALLLDDVLSELDSNRQKFVLNSIDKIQTIITCTGIEEIDKYLDKKQSQLYLVNNGKIKKV.

30–37 (GNNAQGKT) lines the ATP pocket.

The protein belongs to the RecF family.

The protein resides in the cytoplasm. In terms of biological role, the RecF protein is involved in DNA metabolism; it is required for DNA replication and normal SOS inducibility. RecF binds preferentially to single-stranded, linear DNA. It also seems to bind ATP. The polypeptide is DNA replication and repair protein RecF (Clostridium botulinum (strain Loch Maree / Type A3)).